Reading from the N-terminus, the 88-residue chain is Exodeoxyribonuclease 7 small subunit (88 aa).

Residues 68–88 (SDPMHPDDGEPFDPSLVSTSQ) are disordered.

It belongs to the XseB family. Heterooligomer composed of large and small subunits.

Its subcellular location is the cytoplasm. It catalyses the reaction Exonucleolytic cleavage in either 5'- to 3'- or 3'- to 5'-direction to yield nucleoside 5'-phosphates.. Its function is as follows. Bidirectionally degrades single-stranded DNA into large acid-insoluble oligonucleotides, which are then degraded further into small acid-soluble oligonucleotides. The sequence is that of Exodeoxyribonuclease 7 small subunit from Xylella fastidiosa (strain 9a5c).